We begin with the raw amino-acid sequence, 138 residues long: Protein SPMIP3 (138 aa).

In Bos taurus (Bovine), this protein is Protein SPMIP3 (SPMIP3).